A 314-amino-acid chain; its full sequence is Homeobox protein DBX1-A (314 aa).

The segment at residues glycine 175–lysine 234 is a DNA-binding region (homeobox). Disordered regions lie at residues lysine 234–serine 279 and serine 292–serine 314. Residues aspartate 258–serine 267 are compositionally biased toward basic and acidic residues. Residues serine 305–serine 314 are compositionally biased toward acidic residues.

Belongs to the H2.0 homeobox family.

Its subcellular location is the nucleus. This Danio rerio (Zebrafish) protein is Homeobox protein DBX1-A (dbx1a).